Here is a 538-residue protein sequence, read N- to C-terminus: Putative cysteine ligase BshC (538 aa).

Residues 460–484 (KINEQIELLERMLKRNVEKKHEVEL) adopt a coiled-coil conformation.

Belongs to the BshC family.

In terms of biological role, involved in bacillithiol (BSH) biosynthesis. May catalyze the last step of the pathway, the addition of cysteine to glucosamine malate (GlcN-Mal) to generate BSH. The chain is Putative cysteine ligase BshC from Bacillus cereus (strain ATCC 10987 / NRS 248).